Consider the following 148-residue polypeptide: Vascular endothelial growth factor homolog (148 aa).

An N-terminal signal peptide occupies residues 1–25 (MKLTATLQVVVALLICMYNLPECVS). Disulfide bonds link Cys-46–Cys-88, Cys-77–Cys-130, and Cys-81–Cys-132. Asn-95 carries N-linked (GlcNAc...) asparagine; by host glycosylation.

This sequence belongs to the PDGF/VEGF growth factor family. As to quaternary structure, homodimer; disulfide-linked.

Its subcellular location is the secreted. Functionally, induces endothelial proliferation. This is Vascular endothelial growth factor homolog from Orf virus (strain NZ7) (OV NZ-7).